Here is a 119-residue protein sequence, read N- to C-terminus: Holo-[acyl-carrier-protein] synthase (119 aa).

The Mg(2+) site is built by aspartate 8 and glutamate 58.

Belongs to the P-Pant transferase superfamily. AcpS family. It depends on Mg(2+) as a cofactor.

The protein localises to the cytoplasm. The catalysed reaction is apo-[ACP] + CoA = holo-[ACP] + adenosine 3',5'-bisphosphate + H(+). Transfers the 4'-phosphopantetheine moiety from coenzyme A to a Ser of acyl-carrier-protein. The protein is Holo-[acyl-carrier-protein] synthase of Streptococcus suis (strain 05ZYH33).